Here is a 314-residue protein sequence, read N- to C-terminus: uncharacterized protein (314 aa).

The N-terminal 29 residues, 1–29 (MMRLIRTLPLRCFKTRIRRQGSLLCLRCF), are a transit peptide targeting the mitochondrion. The disordered stretch occupies residues 52–74 (SSSPLSKNKEKQEKPEKENEGKH). Residues 58 to 74 (KNKEKQEKPEKENEGKH) are compositionally biased toward basic and acidic residues. Positions 177–207 (LNEHHLQLLKLKRELNSIHDELNEIIIDLLQ) form a coiled coil. The chain crosses the membrane as a helical span at residues 262-279 (GLLVILVLVCSIMIGVSA). The segment at 281–314 (KKERPGLQEPEEPEILAPKEDIDTTFPQDQHDID) is disordered.

The protein localises to the mitochondrion membrane. This is an uncharacterized protein from Saccharomyces cerevisiae (strain ATCC 204508 / S288c) (Baker's yeast).